Reading from the N-terminus, the 278-residue chain is 4-deoxy-L-threo-5-hexosulose-uronate ketol-isomerase (278 aa).

Positions 196, 198, 203, and 245 each coordinate Zn(2+).

This sequence belongs to the KduI family. Requires Zn(2+) as cofactor.

It catalyses the reaction 5-dehydro-4-deoxy-D-glucuronate = 3-deoxy-D-glycero-2,5-hexodiulosonate. The protein operates within glycan metabolism; pectin degradation; 2-dehydro-3-deoxy-D-gluconate from pectin: step 4/5. In terms of biological role, catalyzes the isomerization of 5-dehydro-4-deoxy-D-glucuronate to 3-deoxy-D-glycero-2,5-hexodiulosonate. The sequence is that of 4-deoxy-L-threo-5-hexosulose-uronate ketol-isomerase from Salmonella typhimurium (strain LT2 / SGSC1412 / ATCC 700720).